Reading from the N-terminus, the 474-residue chain is 3-isopropylmalate dehydratase large subunit (474 aa).

Residues 293 to 313 (GTTPGQGIGITEEIPAPEDLP) form a disordered region. Cys-348, Cys-408, and Cys-411 together coordinate [4Fe-4S] cluster.

The protein belongs to the aconitase/IPM isomerase family. LeuC type 1 subfamily. As to quaternary structure, heterodimer of LeuC and LeuD. Requires [4Fe-4S] cluster as cofactor.

The catalysed reaction is (2R,3S)-3-isopropylmalate = (2S)-2-isopropylmalate. It functions in the pathway amino-acid biosynthesis; L-leucine biosynthesis; L-leucine from 3-methyl-2-oxobutanoate: step 2/4. Its function is as follows. Catalyzes the isomerization between 2-isopropylmalate and 3-isopropylmalate, via the formation of 2-isopropylmaleate. The chain is 3-isopropylmalate dehydratase large subunit from Natronomonas pharaonis (strain ATCC 35678 / DSM 2160 / CIP 103997 / JCM 8858 / NBRC 14720 / NCIMB 2260 / Gabara) (Halobacterium pharaonis).